The primary structure comprises 125 residues: Salivary protein 15 Ipac-1 (125 aa).

The signal sequence occupies residues 1–15 (MKVVCIILLFGIAAA). 2 N-linked (GlcNAc...) asparagine glycosylation sites follow: asparagine 82 and asparagine 94. Positions 106–125 (GPSGQTCADKSKCVGHIPGC) are CD4-binding.

It belongs to the salp15 family. In terms of assembly, interacts with host CD4. Interacts with host DC-SIGN (CD209). Interacts with Borrelia outer surface protein C (OspC). Expressed in salivary glands.

It localises to the secreted. In terms of biological role, salivary tick protein that downregulates host immune system by binding to both dendritic cells, and CD4(+) T cells. Specifically binds to the CD4 coreceptor on T cells. This interaction prevents the activation of the Src kinase, Lck, and its downstream substrate Zap-70, and results in deficient activation of PLCgamma1, the repression of calcium fluxes triggered by T-cell antigen receptor (TCR) ligation, and a subsequent reduction in interleukin-2 production. This salivary protein also binds to DC-SIGN (CD209) on dendritic cells (DC) and activates the Raf-1 kinase/MEK signaling pathway that results in down-regulating expression of pro-inflammatory cytokines. Furthermore, it inhibits T cell proliferation induced by DCs. It also inhibits in vitro keratinocyte inflammation induced by Borrelia burgdorferi or by the major outer surface protein (OspC) of Borrelia. In addition, it downregulates chemokines and monocyte chemoattractant protein 1, as well as several antimicrobial peptides such as defensins, cathelicidin, psoriasin, and RNase 7. Apart from its immunomodulatory activities, it is also associated with protection of Borrelia spirochetes from antibody-mediated killing through its binding to OspC. In vivo, tests on different immune disease animal models show promising therapeutic results, e.g., in inhibiting HIV infection, experimental autoimmune encephalomyelitis, transplantation rejection, and asthma. This Ixodes pacificus (Western black-legged tick) protein is Salivary protein 15 Ipac-1.